A 494-amino-acid polypeptide reads, in one-letter code: Cheilanthifoline synthase (494 aa).

Residues 4–24 (TIWLIISTVIIVLGIAKFLLG) form a helical membrane-spanning segment. Residue cysteine 437 coordinates heme.

The protein belongs to the cytochrome P450 family. The cofactor is heme. Expressed in roots and at lower levels in stems, leaves and plantlets.

Its subcellular location is the endoplasmic reticulum membrane. It catalyses the reaction (S)-scoulerine + reduced [NADPH--hemoprotein reductase] + O2 = (S)-cheilanthifoline + oxidized [NADPH--hemoprotein reductase] + 2 H2O + H(+). In terms of biological role, methylenedioxy bridge-forming cytochrome P450 involved in the biosynthesis of isoquinoline alkaloids. Converts (S)-scoulerine into (S)-cheilanthifoline, a precursor of sanguinarine. Catalyzes an oxidative reaction that does not incorporate oxygen into the product. This is Cheilanthifoline synthase from Argemone mexicana (Mexican prickly poppy).